We begin with the raw amino-acid sequence, 317 residues long: Pantothenate kinase (317 aa).

95–102 (GSVAVGKS) contributes to the ATP binding site.

Belongs to the prokaryotic pantothenate kinase family.

The protein resides in the cytoplasm. It catalyses the reaction (R)-pantothenate + ATP = (R)-4'-phosphopantothenate + ADP + H(+). The protein operates within cofactor biosynthesis; coenzyme A biosynthesis; CoA from (R)-pantothenate: step 1/5. The protein is Pantothenate kinase of Myxococcus xanthus (strain DK1622).